A 657-amino-acid polypeptide reads, in one-letter code: Methionine--tRNA ligase (657 aa).

The short motif at 13 to 23 (YYPSGNLHIGH) is the 'HIGH' region element. Residues 308-312 (KMSKS) carry the 'KMSKS' region motif. ATP is bound at residue lysine 311. The tRNA-binding domain maps to 557–657 (DFDKVEIKAA…SAIPNGAVIK (101 aa)).

The protein belongs to the class-I aminoacyl-tRNA synthetase family. MetG type 2B subfamily. In terms of assembly, homodimer.

It is found in the cytoplasm. It carries out the reaction tRNA(Met) + L-methionine + ATP = L-methionyl-tRNA(Met) + AMP + diphosphate. Is required not only for elongation of protein synthesis but also for the initiation of all mRNA translation through initiator tRNA(fMet) aminoacylation. The polypeptide is Methionine--tRNA ligase (Staphylococcus aureus (strain MW2)).